A 153-amino-acid polypeptide reads, in one-letter code: Transcription antitermination protein NusB (153 aa).

Belongs to the NusB family.

In terms of biological role, involved in transcription antitermination. Required for transcription of ribosomal RNA (rRNA) genes. Binds specifically to the boxA antiterminator sequence of the ribosomal RNA (rrn) operons. The sequence is that of Transcription antitermination protein NusB from Fusobacterium nucleatum subsp. nucleatum (strain ATCC 25586 / DSM 15643 / BCRC 10681 / CIP 101130 / JCM 8532 / KCTC 2640 / LMG 13131 / VPI 4355).